Here is a 395-residue protein sequence, read N- to C-terminus: S-adenosylmethionine synthase (395 aa).

An ATP-binding site is contributed by H16. D18 contacts Mg(2+). E44 contacts K(+). E57 and Q100 together coordinate L-methionine. A flexible loop region spans residues 100 to 110 (QSPDIAQGVDR). ATP-binding positions include 167–169 (DAK), 233–234 (RF), D242, 248–249 (RK), A265, and K269. D242 lines the L-methionine pocket. L-methionine is bound at residue K273.

This sequence belongs to the AdoMet synthase family. In terms of assembly, homotetramer; dimer of dimers. It depends on Mg(2+) as a cofactor. K(+) is required as a cofactor.

The protein localises to the cytoplasm. The catalysed reaction is L-methionine + ATP + H2O = S-adenosyl-L-methionine + phosphate + diphosphate. Its pathway is amino-acid biosynthesis; S-adenosyl-L-methionine biosynthesis; S-adenosyl-L-methionine from L-methionine: step 1/1. Its function is as follows. Catalyzes the formation of S-adenosylmethionine (AdoMet) from methionine and ATP. The overall synthetic reaction is composed of two sequential steps, AdoMet formation and the subsequent tripolyphosphate hydrolysis which occurs prior to release of AdoMet from the enzyme. The protein is S-adenosylmethionine synthase of Burkholderia cenocepacia (strain HI2424).